We begin with the raw amino-acid sequence, 156 residues long: MSLVIDFFDETEEVKEEYVNMIRELLEKAAQMEGVEDGTELSVTFVDNERIREINRDYRGKDQPTDVISFALEDMGEGEVEIIGADMPRMLGDLIISIPRTKEQAEEYGHSFDRELGFLALHGFLHLLGYDHMTEEDEKEMFGKQKEILGAFGLRR.

Residues His122, His126, and His132 each contribute to the Zn(2+) site.

The protein belongs to the endoribonuclease YbeY family. It depends on Zn(2+) as a cofactor.

The protein localises to the cytoplasm. Functionally, single strand-specific metallo-endoribonuclease involved in late-stage 70S ribosome quality control and in maturation of the 3' terminus of the 16S rRNA. The protein is Endoribonuclease YbeY of Bacillus cytotoxicus (strain DSM 22905 / CIP 110041 / 391-98 / NVH 391-98).